The following is an 873-amino-acid chain: Inner centromere protein A (873 aa).

Disordered stretches follow at residues 50-124 (AEPE…KRMT), 237-270 (PANEQQLNLSNQSATPTGSKSDRRSVRRSLVVRK), 282-452 (FSLA…PPPH), 484-535 (KRNT…KVRR), 566-649 (QIDE…LAEQ), 683-736 (LERA…EQAA), and 781-800 (DLNSDDSTDDESQPRKPIPA). Positions 60–69 (SQKRRRKKRT) are enriched in basic residues. Residues 87 to 105 (RQSNASWSSSVRRLSVRNQ) show a composition bias toward low complexity. Positions 239–254 (NEQQLNLSNQSATPTG) are enriched in polar residues. Residues 261–270 (SVRRSLVVRK) show a composition bias toward basic residues. The segment covering 286–297 (SKRESMTREAVR) has biased composition (basic and acidic residues). A compositionally biased stretch (low complexity) spans 314-325 (SSTSSQRSYQSS). Pro residues predominate over residues 437–452 (PSPPCPPSKIVRPPPH). 4 stretches are compositionally biased toward basic and acidic residues: residues 491–535 (TDPK…KVRR), 566–584 (QIDEKSEKVREDRMAEEKA), 591–649 (KKQE…LAEQ), and 683–733 (LERA…KAKE). The interval 494–707 (KTEEKERQRL…EERKKREQQE (214 aa)) is SAH. The interval 782–856 (LNSDDSTDDE…RTSSAVWHSP (75 aa)) is IN box. Phosphoserine occurs at positions 849 and 850.

The protein belongs to the INCENP family. As to quaternary structure, component of the CPC composed of survivin/birc5, incenp, cdca8/borealin and/or cdca9/dasra-A, and aurkb/aurora-B. Interacts (via C-terminus) with aurkb (via N-terminus and kinase domain). Interacts (via N-terminus) with birc5.1, birc5.2, cdca8 and cdca9. Interacts with mtus1.

It is found in the nucleus. The protein resides in the chromosome. The protein localises to the centromere. It localises to the cytoplasm. Its subcellular location is the cytoskeleton. It is found in the spindle. The protein resides in the midbody. The protein localises to the kinetochore. Component of the chromosomal passenger complex (CPC), a complex that acts as a key regulator of mitosis. The CPC complex has essential functions at the centromere in ensuring correct chromosome alignment and segregation and is required for chromatin-induced microtubule stabilization and spindle assembly. Acts as a scaffold regulating CPC localization and activity. The C-terminus associates with aurkb/aurora-B, the N-terminus associated with cdca8/borealin and/or cdca9/dasra-A tethers the CPC to the inner centromere, and the microtubule binding activity within the central SAH domain directs aurkb/aurora-B toward substrates near microtubules. Activates aurkb. The sequence is that of Inner centromere protein A (incenp-a) from Xenopus laevis (African clawed frog).